The sequence spans 173 residues: Alpha-crystallin A chain (173 aa).

The residue at position 1 (Met1) is an N-acetylmethionine. Residues 1 to 63 (MDIAIQHPWF…RTVLDSGISE (63 aa)) are required for complex formation with BFSP1 and BFSP2. Gln6 is subject to Deamidated glutamine; partial. Ser45 carries the post-translational modification Phosphoserine. At Gln50 the chain carries Deamidated glutamine; partial. Residues 52-162 (LFRTVLDSGI…GHSERAIPVS (111 aa)) enclose the sHSP domain. N6-acetyllysine occurs at positions 70 and 99. His100 contacts Zn(2+). Asn101 bears the Deamidated asparagine; partial mark. Residues Glu102 and His107 each coordinate Zn(2+). Ser122 is modified (phosphoserine). Asn123 carries the deamidated asparagine; partial modification. Residues 144–173 (PKVPSGMDAGHSERAIPVSREEKPSSAPSS) are disordered. Positions 153-167 (GHSERAIPVSREEKP) are enriched in basic and acidic residues. Position 154 (His154) interacts with Zn(2+). Ser162 is a glycosylation site (O-linked (GlcNAc) serine).

This sequence belongs to the small heat shock protein (HSP20) family. In terms of assembly, heteromer composed of three CRYAA and one CRYAB subunits. Inter-subunit bridging via zinc ions enhances stability, which is crucial as there is no protein turn over in the lens. Can also form homodimers and homotetramers (dimers of dimers) which serve as the building blocks of homooligomers. Within homooligomers, the zinc-binding motif is created from residues of 3 different molecules. His-100 and Glu-102 from one molecule are ligands of the zinc ion, and His-107 and His-154 residues from additional molecules complete the site with tetrahedral coordination geometry. Part of a complex required for lens intermediate filament formation composed of BFSP1, BFSP2 and CRYAA. In terms of processing, acetylation at Lys-70 may increase chaperone activity. Undergoes age-dependent proteolytical cleavage at the C-terminus.

It is found in the cytoplasm. The protein resides in the nucleus. Its function is as follows. Contributes to the transparency and refractive index of the lens. Acts as a chaperone, preventing aggregation of various proteins under a wide range of stress conditions. Required for the correct formation of lens intermediate filaments as part of a complex composed of BFSP1, BFSP2 and CRYAA. The chain is Alpha-crystallin A chain (CRYAA) from Melursus ursinus (Sloth bear).